The primary structure comprises 182 residues: NADH-ubiquinone oxidoreductase 20 kDa subunit (182 aa).

Positions 57, 58, 122, and 152 each coordinate [4Fe-4S] cluster.

The protein belongs to the complex I 20 kDa subunit family. It depends on [4Fe-4S] cluster as a cofactor.

Its subcellular location is the mitochondrion. It carries out the reaction a ubiquinone + NADH + 5 H(+)(in) = a ubiquinol + NAD(+) + 4 H(+)(out). In Reclinomonas americana, this protein is NADH-ubiquinone oxidoreductase 20 kDa subunit (NAD10).